A 438-amino-acid polypeptide reads, in one-letter code: Transposon Ty2-GR1 Gag polyprotein (438 aa).

3 stretches are compositionally biased toward polar residues: residues 1-11 (MESQQLHQNPH), 19-39 (ASVT…SASN), and 49-60 (KVNSQQETTPGT). Disordered stretches follow at residues 1–86 (MESQ…GQYQ), 360–403 (HSEY…ATSS), and 418–438 (VSSQ…TERI). Positions 295–397 (ENNINVSDRL…SSKPRAAKAH (103 aa)) are RNA-binding. Residues 369–381 (TSPNTTNTKVTTR) are compositionally biased toward low complexity.

In terms of assembly, homotrimer.

The protein localises to the cytoplasm. In terms of biological role, capsid protein (CA) is the structural component of the virus-like particle (VLP), forming the shell that encapsulates the retrotransposons dimeric RNA genome. The particles are assembled from trimer-clustered units and there are holes in the capsid shells that allow for the diffusion of macromolecules. CA also has nucleocapsid-like chaperone activity, promoting primer tRNA(i)-Met annealing to the multipartite primer-binding site (PBS), dimerization of Ty2 RNA and initiation of reverse transcription. The chain is Transposon Ty2-GR1 Gag polyprotein (TY2A-GR1) from Saccharomyces cerevisiae (strain ATCC 204508 / S288c) (Baker's yeast).